A 129-amino-acid polypeptide reads, in one-letter code: UPF0047 protein Mb2586c (129 aa).

It belongs to the UPF0047 family.

The sequence is that of UPF0047 protein Mb2586c from Mycobacterium bovis (strain ATCC BAA-935 / AF2122/97).